The following is a 142-amino-acid chain: Universal stress protein D (142 aa).

This sequence belongs to the universal stress protein A family.

The protein localises to the cytoplasm. Functionally, required for resistance to DNA-damaging agents. In Escherichia coli O157:H7, this protein is Universal stress protein D (uspD).